Here is a 495-residue protein sequence, read N- to C-terminus: Loline biosynthesis cluster 1 transcription factor lolU1 (495 aa).

It is found in the nucleus. Transcriptional regulator that may regulate the expression of the loline biosynthesis cluster 1, one of the 2 clusters involved in the biosynthesis of loline alkaloids, potent insecticidal agents composed of a pyrrolizidine ring system and an uncommon ether bridge linking carbons 2 and 7. This chain is Loline biosynthesis cluster 1 transcription factor lolU1, found in Epichloe uncinata (Endophyte fungus).